Consider the following 293-residue polypeptide: GTPase Era (293 aa).

An Era-type G domain is found at K2 to E168. Positions G10 to S17 are G1. G10–S17 provides a ligand contact to GTP. A G2 region spans residues Q36–D40. Residues D57–G60 are G3. Residues D57–I61 and T118–D121 each bind GTP. A G4 region spans residues T118–D121. The tract at residues I147 to S149 is G5. Positions L199–K279 constitute a KH type-2 domain.

It belongs to the TRAFAC class TrmE-Era-EngA-EngB-Septin-like GTPase superfamily. Era GTPase family. As to quaternary structure, monomer.

It is found in the cytoplasm. Its subcellular location is the cell membrane. Functionally, an essential GTPase that binds both GDP and GTP, with rapid nucleotide exchange. Plays a role in 16S rRNA processing and 30S ribosomal subunit biogenesis and possibly also in cell cycle regulation and energy metabolism. The sequence is that of GTPase Era from Mycoplasmopsis pulmonis (strain UAB CTIP) (Mycoplasma pulmonis).